Here is a 510-residue protein sequence, read N- to C-terminus: NAD(P)H-quinone oxidoreductase subunit 2, chloroplastic (510 aa).

12 helical membrane-spanning segments follow: residues 24–44, 59–79, 99–119, 124–144, 149–169, 183–203, 229–249, 295–315, 323–343, 354–374, 395–415, and 418–438; these read LLLFHGSFIFPECILIFGLIL, WFYFISSTSLIISITALLFRW, IFQFLILLCSTLCIPLSVEYI, MAITEFLLFVLTATLGGMFLC, LITIFVAPECFSLCSYLLSGY, YLLMGGASSSILVHGFSWLYG, ISIALISITVGIGFKLSPAPF, WHLLLEILAILSMILGNLIAI, MLAYSSIGQIGYVIIGIIVGD, YMLFYISMNLGTFACIVLFGL, ALSSALCLLSLGGLPPLAGFF, and LHLFWCGWQAGLYFLVSIGLL.

This sequence belongs to the complex I subunit 2 family. As to quaternary structure, NDH is composed of at least 16 different subunits, 5 of which are encoded in the nucleus.

The protein localises to the plastid. It is found in the chloroplast thylakoid membrane. It carries out the reaction a plastoquinone + NADH + (n+1) H(+)(in) = a plastoquinol + NAD(+) + n H(+)(out). The catalysed reaction is a plastoquinone + NADPH + (n+1) H(+)(in) = a plastoquinol + NADP(+) + n H(+)(out). Its function is as follows. NDH shuttles electrons from NAD(P)H:plastoquinone, via FMN and iron-sulfur (Fe-S) centers, to quinones in the photosynthetic chain and possibly in a chloroplast respiratory chain. The immediate electron acceptor for the enzyme in this species is believed to be plastoquinone. Couples the redox reaction to proton translocation, and thus conserves the redox energy in a proton gradient. This Ensete ventricosum (Abyssinian banana) protein is NAD(P)H-quinone oxidoreductase subunit 2, chloroplastic.